A 254-amino-acid polypeptide reads, in one-letter code: 3-deoxy-manno-octulosonate cytidylyltransferase (254 aa).

This sequence belongs to the KdsB family.

It localises to the cytoplasm. The catalysed reaction is 3-deoxy-alpha-D-manno-oct-2-ulosonate + CTP = CMP-3-deoxy-beta-D-manno-octulosonate + diphosphate. It functions in the pathway nucleotide-sugar biosynthesis; CMP-3-deoxy-D-manno-octulosonate biosynthesis; CMP-3-deoxy-D-manno-octulosonate from 3-deoxy-D-manno-octulosonate and CTP: step 1/1. The protein operates within bacterial outer membrane biogenesis; lipopolysaccharide biosynthesis. Functionally, activates KDO (a required 8-carbon sugar) for incorporation into bacterial lipopolysaccharide in Gram-negative bacteria. The sequence is that of 3-deoxy-manno-octulosonate cytidylyltransferase from Haemophilus influenzae (strain ATCC 51907 / DSM 11121 / KW20 / Rd).